Reading from the N-terminus, the 282-residue chain is NH(3)-dependent NAD(+) synthetase (282 aa).

51–58 is an ATP binding site; sequence GISGGVDS. Mg(2+) is bound at residue D57. R148 contacts deamido-NAD(+). T168 lines the ATP pocket. E173 lines the Mg(2+) pocket. K181 and D188 together coordinate deamido-NAD(+). ATP-binding residues include K197 and T219. 268–269 contacts deamido-NAD(+); that stretch reads HK.

The protein belongs to the NAD synthetase family. In terms of assembly, homodimer.

It carries out the reaction deamido-NAD(+) + NH4(+) + ATP = AMP + diphosphate + NAD(+) + H(+). The protein operates within cofactor biosynthesis; NAD(+) biosynthesis; NAD(+) from deamido-NAD(+) (ammonia route): step 1/1. Functionally, catalyzes the ATP-dependent amidation of deamido-NAD to form NAD. Uses ammonia as a nitrogen source. In Burkholderia cenocepacia (strain HI2424), this protein is NH(3)-dependent NAD(+) synthetase.